An 81-amino-acid chain; its full sequence is Putative membrane protein insertion efficiency factor (81 aa).

This sequence belongs to the UPF0161 family.

Its subcellular location is the cell inner membrane. Its function is as follows. Could be involved in insertion of integral membrane proteins into the membrane. The sequence is that of Putative membrane protein insertion efficiency factor from Legionella pneumophila (strain Lens).